Reading from the N-terminus, the 185-residue chain is Protein PBP4 (185 aa).

Composition is skewed to low complexity over residues 1–24 (MTTTSTTSVDGRTSSTLKATLSAS) and 46–62 (AQAAAKALPRQQQQQQQ). Disordered regions lie at residues 1–116 (MTTT…YNRE) and 147–168 (ETASGRVSTATDWGTVSSSKNK). 3 stretches are compositionally biased toward polar residues: residues 73 to 83 (PANTKTKTIAS), 91 to 102 (KGSSTANGSSTN), and 147 to 166 (ETASGRVSTATDWGTVSSSK).

In terms of assembly, interacts with IGO1, LSM12 and PBP1.

The protein localises to the cytoplasm. It localises to the nucleus. This chain is Protein PBP4 (PBP4), found in Saccharomyces cerevisiae (strain ATCC 204508 / S288c) (Baker's yeast).